Consider the following 201-residue polypeptide: Adenylyl-sulfate kinase (201 aa).

35–42 contributes to the ATP binding site; the sequence is GLSGSGKS. Ser109 (phosphoserine intermediate) is an active-site residue.

It belongs to the APS kinase family.

The catalysed reaction is adenosine 5'-phosphosulfate + ATP = 3'-phosphoadenylyl sulfate + ADP + H(+). It participates in sulfur metabolism; hydrogen sulfide biosynthesis; sulfite from sulfate: step 2/3. Catalyzes the synthesis of activated sulfate. The polypeptide is Adenylyl-sulfate kinase (Salmonella paratyphi A (strain AKU_12601)).